A 426-amino-acid polypeptide reads, in one-letter code: Serine--tRNA ligase (426 aa).

Position 229 to 231 (229 to 231) interacts with L-serine; the sequence is TAE. Residues 260–262 and valine 276 each bind ATP; that span reads RKE. Glutamate 283 contacts L-serine. 349-352 provides a ligand contact to ATP; it reads EVTS. L-serine is bound at residue threonine 384.

It belongs to the class-II aminoacyl-tRNA synthetase family. Type-1 seryl-tRNA synthetase subfamily. In terms of assembly, homodimer. The tRNA molecule binds across the dimer.

It is found in the cytoplasm. The catalysed reaction is tRNA(Ser) + L-serine + ATP = L-seryl-tRNA(Ser) + AMP + diphosphate + H(+). The enzyme catalyses tRNA(Sec) + L-serine + ATP = L-seryl-tRNA(Sec) + AMP + diphosphate + H(+). Its pathway is aminoacyl-tRNA biosynthesis; selenocysteinyl-tRNA(Sec) biosynthesis; L-seryl-tRNA(Sec) from L-serine and tRNA(Sec): step 1/1. Functionally, catalyzes the attachment of serine to tRNA(Ser). Is also able to aminoacylate tRNA(Sec) with serine, to form the misacylated tRNA L-seryl-tRNA(Sec), which will be further converted into selenocysteinyl-tRNA(Sec). The protein is Serine--tRNA ligase of Treponema pallidum (strain Nichols).